Reading from the N-terminus, the 429-residue chain is Endoglucanase type C (429 aa).

An N-terminal signal peptide occupies residues 1 to 18 (MKSLSLILSALAVQVAVA). Glutamine 19 is subject to Pyrrolidone carboxylic acid. 9 cysteine pairs are disulfide-bonded: cysteine 36–cysteine 42, cysteine 66–cysteine 88, cysteine 78–cysteine 84, cysteine 156–cysteine 383, cysteine 190–cysteine 213, cysteine 194–cysteine 212, cysteine 233–cysteine 252, cysteine 241–cysteine 246, and cysteine 257–cysteine 333. Asparagine 74 carries an N-linked (GlcNAc...) asparagine glycan. Glutamate 215 serves as the catalytic Nucleophile. The active-site Proton donor is the glutamate 220. N-linked (GlcNAc...) asparagine glycans are attached at residues asparagine 265 and asparagine 318.

The protein belongs to the glycosyl hydrolase 7 (cellulase C) family.

The catalysed reaction is Endohydrolysis of (1-&gt;4)-beta-D-glucosidic linkages in cellulose, lichenin and cereal beta-D-glucans.. This chain is Endoglucanase type C, found in Fusarium oxysporum (Fusarium vascular wilt).